The sequence spans 1907 residues: Chromatin modification-related protein EAF1 B (1907 aa).

Disordered regions lie at residues Ala-108–Val-208, Asn-261–Thr-287, Gly-323–Asn-373, and Asn-449–Lys-469. Over residues Ser-140–Leu-151 the composition is skewed to basic and acidic residues. 3 stretches are compositionally biased toward polar residues: residues Asn-261–Thr-270, Gly-333–Asn-342, and Thr-355–Ala-372. Positions Cys-563–Ser-641 constitute an HSA domain. Disordered stretches follow at residues Ser-836–Lys-909 and Ala-928–Leu-952. Positions Arg-856 to Val-866 are enriched in basic residues. Composition is skewed to polar residues over residues Thr-884–Tyr-898 and Gln-942–Leu-952. The 57-residue stretch at Ser-1049–Lys-1105 folds into the SANT domain. Disordered regions lie at residues Ala-1107–Pro-1131, Pro-1235–Ser-1266, Leu-1296–His-1319, Gly-1429–Ala-1465, Tyr-1477–Asn-1594, Val-1638–Thr-1703, Val-1767–Asn-1791, and Val-1824–Glu-1907. Composition is skewed to polar residues over residues Asp-1116–Ser-1125, Ala-1242–Ser-1266, Leu-1296–Ala-1310, Leu-1431–Leu-1444, and Gln-1453–Gln-1462. Low complexity predominate over residues Pro-1493 to Gln-1512. Over residues Thr-1513–Pro-1529 the composition is skewed to pro residues. Polar residues-rich tracts occupy residues Asn-1532–Gln-1545, Ser-1554–Lys-1568, Arg-1585–Asn-1594, Pro-1640–Gln-1655, Pro-1662–Pro-1672, Pro-1681–Thr-1703, Gln-1769–Thr-1782, and Val-1824–Leu-1844. Composition is skewed to basic and acidic residues over residues Ser-1863–Glu-1872 and Leu-1882–Glu-1892.

It belongs to the EAF1 family. In terms of assembly, component of the NuA4 histone acetyltransferase complex. Interacts with ARP4 and SWC4, and (via HSA domain) with TAF14 and TAF14B. Expressed in leaves.

The protein resides in the nucleus. Functionally, component of the NuA4 histone acetyltransferase complex which is involved in transcriptional activation of selected genes principally by acetylation of nucleosomal histone H4 and H2A. This chain is Chromatin modification-related protein EAF1 B (EAF1B), found in Arabidopsis thaliana (Mouse-ear cress).